We begin with the raw amino-acid sequence, 513 residues long: ATP synthase subunit alpha (513 aa).

ATP is bound at residue 169-176 (GDRQIGKT).

This sequence belongs to the ATPase alpha/beta chains family. In terms of assembly, F-type ATPases have 2 components, CF(1) - the catalytic core - and CF(0) - the membrane proton channel. CF(1) has five subunits: alpha(3), beta(3), gamma(1), delta(1), epsilon(1). CF(0) has three main subunits: a(1), b(2) and c(9-12). The alpha and beta chains form an alternating ring which encloses part of the gamma chain. CF(1) is attached to CF(0) by a central stalk formed by the gamma and epsilon chains, while a peripheral stalk is formed by the delta and b chains.

It is found in the cell inner membrane. It catalyses the reaction ATP + H2O + 4 H(+)(in) = ADP + phosphate + 5 H(+)(out). Functionally, produces ATP from ADP in the presence of a proton gradient across the membrane. The alpha chain is a regulatory subunit. This chain is ATP synthase subunit alpha, found in Vibrio alginolyticus.